The sequence spans 967 residues: Zinc finger protein with KRAB and SCAN domains 2 (967 aa).

Lys-22 participates in a covalent cross-link: Glycyl lysine isopeptide (Lys-Gly) (interchain with G-Cter in SUMO2). Residues 45–127 (RKCFRQFCYE…ALVVHLEKET (83 aa)) enclose the SCAN box domain. Positions 150-205 (WEVADFQPEQVETQPRAVSREEPGSLHSGHQEQLNRKRERRPLPKNARPSPWVPAL) are disordered. Residues 167-185 (VSREEPGSLHSGHQEQLNR) are compositionally biased toward basic and acidic residues. The region spanning 229 to 300 (VKDVHVARGF…GLHSSNKRSI (72 aa)) is the KRAB domain. Residues Lys-242, Lys-259, Lys-277, Lys-337, Lys-482, and Lys-529 each participate in a glycyl lysine isopeptide (Lys-Gly) (interchain with G-Cter in SUMO2) cross-link. Residues 586–602 (RASAPSPSTPEEVPSPS) show a composition bias toward low complexity. The disordered stretch occupies residues 586-626 (RASAPSPSTPEEVPSPSRQERGGIEVEPQEPTGWEPEETSQ). Ser-591 and Ser-600 each carry phosphoserine. Residues Lys-734, Lys-745, and Lys-752 each participate in a glycyl lysine isopeptide (Lys-Gly) (interchain with G-Cter in SUMO2) cross-link. C2H2-type zinc fingers lie at residues 775–797 (YKCG…QRIH), 803–825 (FKCL…QRIH), 831–853 (YRCG…QRTH), 859–881 (YQCG…RRVH), 887–909 (YKCV…RRIH), and 915–937 (YGCA…REVH). The tract at residues 941 to 967 (KPLPHPPSLYCPENPHKGKTDEFRKTF) is disordered. Residues 954 to 967 (NPHKGKTDEFRKTF) show a composition bias toward basic and acidic residues.

It belongs to the krueppel C2H2-type zinc-finger protein family.

The protein resides in the nucleus. Its function is as follows. May be involved in transcriptional regulation. This is Zinc finger protein with KRAB and SCAN domains 2 (ZKSCAN2) from Homo sapiens (Human).